Consider the following 128-residue polypeptide: S-adenosylmethionine decarboxylase proenzyme (128 aa).

Serine 61 functions as the Schiff-base intermediate with substrate; via pyruvic acid in the catalytic mechanism. Serine 61 carries the post-translational modification Pyruvic acid (Ser); by autocatalysis. Histidine 66 functions as the Proton acceptor; for processing activity in the catalytic mechanism. Catalysis depends on cysteine 81, which acts as the Proton donor; for catalytic activity.

This sequence belongs to the prokaryotic AdoMetDC family. Type 1 subfamily. As to quaternary structure, heterotetramer of two alpha and two beta chains arranged as a dimer of alpha/beta heterodimers. It depends on pyruvate as a cofactor. In terms of processing, is synthesized initially as an inactive proenzyme. Formation of the active enzyme involves a self-maturation process in which the active site pyruvoyl group is generated from an internal serine residue via an autocatalytic post-translational modification. Two non-identical subunits are generated from the proenzyme in this reaction, and the pyruvate is formed at the N-terminus of the alpha chain, which is derived from the carboxyl end of the proenzyme. The post-translation cleavage follows an unusual pathway, termed non-hydrolytic serinolysis, in which the side chain hydroxyl group of the serine supplies its oxygen atom to form the C-terminus of the beta chain, while the remainder of the serine residue undergoes an oxidative deamination to produce ammonia and the pyruvoyl group blocking the N-terminus of the alpha chain.

It carries out the reaction S-adenosyl-L-methionine + H(+) = S-adenosyl 3-(methylsulfanyl)propylamine + CO2. Its pathway is amine and polyamine biosynthesis; S-adenosylmethioninamine biosynthesis; S-adenosylmethioninamine from S-adenosyl-L-methionine: step 1/1. Its function is as follows. Catalyzes the decarboxylation of S-adenosylmethionine to S-adenosylmethioninamine (dcAdoMet), the propylamine donor required for the synthesis of the polyamines spermine and spermidine from the diamine putrescine. The chain is S-adenosylmethionine decarboxylase proenzyme from Synechococcus sp. (strain WH7803).